The sequence spans 858 residues: Ubiquitin carboxyl-terminal hydrolase 5 (858 aa).

A2 is modified (N-acetylalanine). The tract at residues 73–98 is disordered; it reads LRRTRRPKEEDTSAGTGDPPRKKPTR. Residue K113 forms a Glycyl lysine isopeptide (Lys-Gly) (interchain with G-Cter in SUMO) linkage. Phosphoserine is present on residues S149 and S156. The UBP-type; degenerate zinc finger occupies 175–283; sequence QVSKHAFNLK…EHLSHFGIDM (109 aa). A disulfide bond links C195 and C816. Residues C199 and C202 each contribute to the Zn(2+) site. W209 serves as a coordination point for substrate. C219 is a Zn(2+) binding site. 221–224 contributes to the substrate binding site; sequence RRYF. A Zn(2+)-binding site is contributed by H232. Positions 259, 261, and 264 each coordinate substrate. T292 carries the post-translational modification Phosphothreonine. The USP domain occupies 326-856; the sequence is TGIRNLGNSC…LGYIYFYQRV (531 aa). Residue C335 is the Nucleophile of the active site. Phosphothreonine is present on T623. 2 UBA domains span residues 654–695 and 722–762; these read MLDE…VMSH and PPPE…IFSH. S779, S783, and S785 each carry phosphoserine. The Proton acceptor role is filled by H818.

Belongs to the peptidase C19 family. In terms of assembly, homodimer. Interacts with TRIML1. Post-translationally, SUMOylated at Lys-113; SUMOylation affects the interaction with Cav3.2 channels. In terms of processing, ubiquitinated by SMURF1; leading to proteasomal degradation.

It is found in the cytoplasm. The protein resides in the stress granule. The protein localises to the nucleus. It carries out the reaction Thiol-dependent hydrolysis of ester, thioester, amide, peptide and isopeptide bonds formed by the C-terminal Gly of ubiquitin (a 76-residue protein attached to proteins as an intracellular targeting signal).. In terms of biological role, deubiquitinating enzyme that participates in a wide range of cellular processes by specifically cleaving isopeptide bonds between ubiquitin and substrate proteins or ubiquitin itself. Affects thereby important cellular signaling pathways such as NF-kappa-B, Wnt/beta-catenin, and cytokine production by regulating ubiquitin-dependent protein degradation. Participates in the activation of the Wnt signaling pathway by promoting FOXM1 deubiquitination and stabilization that induces the recruitment of beta-catenin to Wnt target gene promoter. Regulates the assembly and disassembly of heat-induced stress granules by mediating the hydrolysis of unanchored ubiquitin chains. Promotes lipopolysaccharide-induced apoptosis and inflammatory response by stabilizing the TXNIP protein. Affects T-cell biology by stabilizing the inhibitory receptor on T-cells PDC1. Acts as a negative regulator of autophagy by regulating ULK1 at both protein and mRNA levels. Acts also as a negative regulator of type I interferon production by simultaneously removing both 'Lys-48'-linked unanchored and 'Lys-63'-linked anchored polyubiquitin chains on the transcription factor IRF3. Modulates the stability of DNA mismatch repair protein MLH1 and counteracts the effect of the ubiquitin ligase UBR4. Upon activation by insulin, it gets phosphorylated through mTORC1-mediated phosphorylation to enhance YTHDF1 stability by removing 'Lys-11'-linked polyubiquitination. May also deubiquitinate other substrates such as the calcium channel CACNA1H. The chain is Ubiquitin carboxyl-terminal hydrolase 5 (Usp5) from Mus musculus (Mouse).